A 561-amino-acid chain; its full sequence is Septation ring formation regulator EzrA (561 aa).

Residues 1–3 (MWI) lie on the Extracellular side of the membrane. A helical transmembrane segment spans residues 4–22 (VVFSLLVLTVTFFVYGALR). Residues 23–561 (RKAFYKRVDK…VLEKVQHLAG (539 aa)) are Cytoplasmic-facing. Coiled-coil stretches lie at residues 98–130 (RFQK…IQVL), 166–214 (AKVF…HLLK), and 251–465 (FAID…KLSD).

Belongs to the EzrA family.

It localises to the cell membrane. Negative regulator of FtsZ ring formation; modulates the frequency and position of FtsZ ring formation. Inhibits FtsZ ring formation at polar sites. Interacts either with FtsZ or with one of its binding partners to promote depolymerization. The chain is Septation ring formation regulator EzrA from Halalkalibacterium halodurans (strain ATCC BAA-125 / DSM 18197 / FERM 7344 / JCM 9153 / C-125) (Bacillus halodurans).